Consider the following 96-residue polypeptide: Large ribosomal subunit protein uL23cz (96 aa).

Belongs to the universal ribosomal protein uL23 family. As to quaternary structure, part of the 50S ribosomal subunit.

Its subcellular location is the plastid. The protein localises to the chloroplast. Functionally, binds to 23S rRNA. This is Large ribosomal subunit protein uL23cz (rpl23-A) from Sorghum bicolor (Sorghum).